We begin with the raw amino-acid sequence, 402 residues long: F-box protein At4g22390 (402 aa).

The region spanning 1 to 49 is the F-box domain; the sequence is MAECPTDLINEMFLRLRATTLVKCRVLSKPCFSLIDSPEFVSSHLRRRL.

This Arabidopsis thaliana (Mouse-ear cress) protein is F-box protein At4g22390.